A 201-amino-acid chain; its full sequence is Holliday junction branch migration complex subunit RuvA (201 aa).

A domain I region spans residues 1–65; sequence MIAYIEGRVA…EDALELYGFS (65 aa). The segment at 66 to 143 is domain II; that stretch reads GWDERQTFLV…KVESLPASAG (78 aa). A flexible linker region spans residues 143–147; sequence GLAAG. Residues 148-201 are domain III; that stretch reads VPGSVLRDAVQALGNLGYAEEEAAPVLKNILKQDPDLDVSEALRAALKALAKAR.

The protein belongs to the RuvA family. Homotetramer. Forms an RuvA(8)-RuvB(12)-Holliday junction (HJ) complex. HJ DNA is sandwiched between 2 RuvA tetramers; dsDNA enters through RuvA and exits via RuvB. An RuvB hexamer assembles on each DNA strand where it exits the tetramer. Each RuvB hexamer is contacted by two RuvA subunits (via domain III) on 2 adjacent RuvB subunits; this complex drives branch migration. In the full resolvosome a probable DNA-RuvA(4)-RuvB(12)-RuvC(2) complex forms which resolves the HJ.

It is found in the cytoplasm. The RuvA-RuvB-RuvC complex processes Holliday junction (HJ) DNA during genetic recombination and DNA repair, while the RuvA-RuvB complex plays an important role in the rescue of blocked DNA replication forks via replication fork reversal (RFR). RuvA specifically binds to HJ cruciform DNA, conferring on it an open structure. The RuvB hexamer acts as an ATP-dependent pump, pulling dsDNA into and through the RuvAB complex. HJ branch migration allows RuvC to scan DNA until it finds its consensus sequence, where it cleaves and resolves the cruciform DNA. The sequence is that of Holliday junction branch migration complex subunit RuvA from Oleidesulfovibrio alaskensis (strain ATCC BAA-1058 / DSM 17464 / G20) (Desulfovibrio alaskensis).